The following is a 423-amino-acid chain: Serine incorporator 5 (423 aa).

Residues Met-1–Arg-36 lie on the Extracellular side of the membrane. A helical membrane pass occupies residues Phe-37 to Thr-57. The Cytoplasmic segment spans residues Val-58–Ser-89. The chain crosses the membrane as a helical span at residues Ala-90–Leu-110. Over Lys-111–Asn-124 the chain is Extracellular. N-linked (GlcNAc...) asparagine glycosylation occurs at Asn-113. The helical transmembrane segment at Gly-125–Pro-145 threads the bilayer. The Cytoplasmic segment spans residues Asp-146–Tyr-156. A helical transmembrane segment spans residues Val-157–Ala-177. Topologically, residues His-178–Leu-198 are extracellular. A glycan (N-linked (GlcNAc...) asparagine) is linked at Asn-183. The chain crosses the membrane as a helical span at residues Ala-199–Phe-219. Residues Tyr-220–Lys-230 lie on the Cytoplasmic side of the membrane. The chain crosses the membrane as a helical span at residues Ile-231–Trp-251. Residues Val-252–His-258 lie on the Extracellular side of the membrane. Residues Ser-259 to Leu-279 form a helical membrane-spanning segment. The Cytoplasmic portion of the chain corresponds to Ser-280–Asn-311. The chain crosses the membrane as a helical span at residues Leu-312 to Ser-332. Over Thr-333 to Gly-385 the chain is Extracellular. Residues Thr-386–Met-406 form a helical membrane-spanning segment. The Cytoplasmic segment spans residues Thr-407–Pro-423.

Belongs to the TDE1 family. As to expression, highly expressed in placenta, skeletal muscle, spleen, thymus, testis and peripheral leukocyte and is expressed weakly in the heart, liver and fetal brain.

It is found in the cell membrane. The protein localises to the cytoplasm. The protein resides in the perinuclear region. It carries out the reaction a 1,2-diacyl-sn-glycero-3-phospho-L-serine(in) = a 1,2-diacyl-sn-glycero-3-phospho-L-serine(out). It catalyses the reaction a 1,2-diacyl-sn-glycero-3-phosphocholine(in) = a 1,2-diacyl-sn-glycero-3-phosphocholine(out). The enzyme catalyses a 1,2-diacyl-sn-glycero-3-phosphoethanolamine(in) = a 1,2-diacyl-sn-glycero-3-phosphoethanolamine(out). Restriction factor required to restrict infectivity of lentiviruses, such as HIV-1: acts by inhibiting an early step of viral infection. Impairs the penetration of the viral particle into the cytoplasm. Non-ATP-dependent, non-specific lipid transporter for phosphatidylserine, phosphatidylcholine, and phosphatidylethanolamine. Functions as a scramblase that flips lipids in both directions across the membrane. Phospholipid scrambling results in HIV-1 surface exposure of phosphatidylserine and loss of membrane asymmetry, which leads to changes in HIV-1 Env conformation and loss of infectivity. Enhances the incorporation of serine into phosphatidylserine and sphingolipids. May play a role in providing serine molecules for the formation of myelin glycosphingolipids in oligodendrocytes. The polypeptide is Serine incorporator 5 (Homo sapiens (Human)).